Here is a 328-residue protein sequence, read N- to C-terminus: Glycerol-3-phosphate dehydrogenase [NAD(P)+] (328 aa).

Residues Trp-15, Arg-35, and Lys-108 each contribute to the NADPH site. Sn-glycerol 3-phosphate contacts are provided by Lys-108, Gly-136, and Ser-138. NADPH is bound at residue Ala-140. Lys-191, Asp-244, Ser-254, Arg-255, and Asn-256 together coordinate sn-glycerol 3-phosphate. Lys-191 serves as the catalytic Proton acceptor. NADPH is bound at residue Arg-255. Residues Leu-275 and Glu-277 each coordinate NADPH.

This sequence belongs to the NAD-dependent glycerol-3-phosphate dehydrogenase family.

It is found in the cytoplasm. It carries out the reaction sn-glycerol 3-phosphate + NAD(+) = dihydroxyacetone phosphate + NADH + H(+). The enzyme catalyses sn-glycerol 3-phosphate + NADP(+) = dihydroxyacetone phosphate + NADPH + H(+). It participates in membrane lipid metabolism; glycerophospholipid metabolism. Catalyzes the reduction of the glycolytic intermediate dihydroxyacetone phosphate (DHAP) to sn-glycerol 3-phosphate (G3P), the key precursor for phospholipid synthesis. The sequence is that of Glycerol-3-phosphate dehydrogenase [NAD(P)+] from Azorhizobium caulinodans (strain ATCC 43989 / DSM 5975 / JCM 20966 / LMG 6465 / NBRC 14845 / NCIMB 13405 / ORS 571).